We begin with the raw amino-acid sequence, 61 residues long: Small ribosomal subunit protein uS14 (61 aa).

The Zn(2+) site is built by Cys24, Cys27, Cys40, and Cys43.

The protein belongs to the universal ribosomal protein uS14 family. Zinc-binding uS14 subfamily. Part of the 30S ribosomal subunit. Contacts proteins S3 and S10. Zn(2+) serves as cofactor.

Its function is as follows. Binds 16S rRNA, required for the assembly of 30S particles and may also be responsible for determining the conformation of the 16S rRNA at the A site. This chain is Small ribosomal subunit protein uS14, found in Syntrophus aciditrophicus (strain SB).